Consider the following 132-residue polypeptide: Small ribosomal subunit protein uS8 (132 aa).

It belongs to the universal ribosomal protein uS8 family. Part of the 30S ribosomal subunit. Contacts proteins S5 and S12.

In terms of biological role, one of the primary rRNA binding proteins, it binds directly to 16S rRNA central domain where it helps coordinate assembly of the platform of the 30S subunit. The polypeptide is Small ribosomal subunit protein uS8 (Geotalea uraniireducens (strain Rf4) (Geobacter uraniireducens)).